The chain runs to 182 residues: Large ribosomal subunit protein uL16 (182 aa).

The protein belongs to the universal ribosomal protein uL16 family.

The sequence is that of Large ribosomal subunit protein uL16 from Pyrobaculum arsenaticum (strain DSM 13514 / JCM 11321 / PZ6).